The sequence spans 142 residues: MRILGIDYGDSRIGVAISDPMGWTAQGLEMIKSKDSLKKAVLRLSEIINEYSVTDIVIGYPINMNGTKGPRTERTEEFIKKISDLGQFNIIKWDERLTTVSAHRTMNELGIKASKKKGIVDTMSAVLILQGYLDRIAGNKKS.

It belongs to the YqgF nuclease family.

Its subcellular location is the cytoplasm. Could be a nuclease involved in processing of the 5'-end of pre-16S rRNA. This chain is Putative pre-16S rRNA nuclease, found in Ruminiclostridium cellulolyticum (strain ATCC 35319 / DSM 5812 / JCM 6584 / H10) (Clostridium cellulolyticum).